Here is a 510-residue protein sequence, read N- to C-terminus: Inositol-3-phosphate synthase (510 aa).

Residues Gly70, Gly71, Asn72, Asn73, Asp143, Ile180, Gln190, Arg193, Thr230, Ala231, Asn232, Thr233, Gly281, Ser282, Asp306, Ser309, Asn340, Asn341, Asp342, Lys355, Gly393, Asp394, Asp422, and Ser423 each contribute to the NAD(+) site.

Belongs to the myo-inositol 1-phosphate synthase family. NAD(+) serves as cofactor.

Its subcellular location is the cytoplasm. It is found in the cytosol. The protein localises to the nucleus. It carries out the reaction D-glucose 6-phosphate = 1D-myo-inositol 3-phosphate. It functions in the pathway polyol metabolism; myo-inositol biosynthesis; myo-inositol from D-glucose 6-phosphate: step 1/2. Key enzyme in myo-inositol biosynthesis pathway that catalyzes the conversion of glucose 6-phosphate to 1-myo-inositol 1-phosphate in a NAD-dependent manner. The chain is Inositol-3-phosphate synthase (TUR1) from Spirodela polyrhiza (Giant duckweed).